The primary structure comprises 228 residues: U1 small nuclear ribonucleoprotein C (228 aa).

The Matrin-type; degenerate zinc-finger motif lies at Ala11–His43. Positions Gly83–His127 are disordered. Residues Pro105 to His127 show a composition bias toward pro residues.

It belongs to the U1 small nuclear ribonucleoprotein C family. In terms of assembly, U1 snRNP is composed of the 7 core Sm proteins B/B', D1, D2, D3, E, F and G that assemble in a heptameric protein ring on the Sm site of the small nuclear RNA to form the core snRNP, and at least 3 U1 snRNP-specific proteins U1-70K, U1-A and U1-C. U1-C interacts with U1 snRNA and the 5' splice-site region of the pre-mRNA.

The protein resides in the nucleus. Functionally, component of the spliceosomal U1 snRNP, which is essential for recognition of the pre-mRNA 5' splice-site and the subsequent assembly of the spliceosome. U1-C is directly involved in initial 5' splice-site recognition for both constitutive and regulated alternative splicing. The interaction with the 5' splice-site seems to precede base-pairing between the pre-mRNA and the U1 snRNA. Stimulates commitment or early (E) complex formation by stabilizing the base pairing of the 5' end of the U1 snRNA and the 5' splice-site region. This Batrachochytrium dendrobatidis (strain JAM81 / FGSC 10211) (Frog chytrid fungus) protein is U1 small nuclear ribonucleoprotein C.